A 537-amino-acid polypeptide reads, in one-letter code: [Pyruvate dehydrogenase [acetyl-transferring]]-phosphatase 1, mitochondrial (537 aa).

The N-terminal 71 residues, 1–71 (MPAPTQLFFP…WWHYTQGRRY (71 aa)), are a transit peptide targeting the mitochondrion. Positions 109 to 525 (ILGFDSNQLP…DDITIIVVQF (417 aa)) constitute a PPM-type phosphatase domain. Mn(2+) contacts are provided by D144 and G145. K202 bears the N6-acetyllysine mark. D418 and D516 together coordinate Mn(2+).

Belongs to the PP2C family. Heterodimer of a catalytic (PDP1) and a regulatory (PDPR) subunit. Mn(2+) is required as a cofactor. The cofactor is Mg(2+).

It localises to the mitochondrion. It catalyses the reaction O-phospho-L-seryl-[pyruvate dehydrogenase E1 alpha subunit] + H2O = L-seryl-[pyruvate dehydrogenase E1 alpha subunit] + phosphate. Its activity is regulated as follows. Magnesium-dependent and calcium-stimulated. PDP1 activity strongly depends on its Ca(2+)-dependent binding to the lipoyl domain of E2 subunit of component of the pyruvate dehydrogenase complex. Mitochondrial enzyme that catalyzes the dephosphorylation and concomitant reactivation of the alpha subunit of the E1 component of the pyruvate dehydrogenase complex (PDC), thereby stimulating the conversion of pyruvate into acetyl-CoA. The polypeptide is [Pyruvate dehydrogenase [acetyl-transferring]]-phosphatase 1, mitochondrial (PDP1) (Pongo abelii (Sumatran orangutan)).